We begin with the raw amino-acid sequence, 180 residues long: MRIVVGISGASGIPYAVRFLENLRGHDTYLVISEAAKKVIQYESDENIEYIRSLASHNYEDDDFSAPISSGSFLFDSMVIVPCSITTISKIAAGISDTLITRAAAVSLKERRRLIVVPREMPLSTIDLKNMTYLSENGVIVAPASPGFYTKPKSVDDMVAFVVSRILDLVGVGNDLIKRW.

FMN-binding positions include 9-11 (GAS), serine 33, 84-87 (SITT), and arginine 119. Dimethylallyl phosphate-binding residues include tyrosine 149 and arginine 165.

It belongs to the UbiX/PAD1 family.

It catalyses the reaction dimethylallyl phosphate + FMNH2 = prenylated FMNH2 + phosphate. In terms of biological role, flavin prenyltransferase that catalyzes the synthesis of the prenylated FMN cofactor (prenyl-FMN) for 4-hydroxy-3-polyprenylbenzoic acid decarboxylase UbiD. The prenyltransferase is metal-independent and links a dimethylallyl moiety from dimethylallyl monophosphate (DMAP) to the flavin N5 and C6 atoms of FMN. The polypeptide is Flavin prenyltransferase UbiX (Thermoplasma acidophilum (strain ATCC 25905 / DSM 1728 / JCM 9062 / NBRC 15155 / AMRC-C165)).